A 328-amino-acid chain; its full sequence is Tyrosine--tRNA ligase (328 aa).

Residue Tyr-33 participates in L-tyrosine binding. The 'HIGH' region motif lies at 38–46; it reads PSGVLHIGH. Residues Tyr-154, Gln-158, Asp-161, and Gln-176 each coordinate L-tyrosine. The interval 193 to 227 is disordered; the sequence is EPPTSLHTPLIADLGTGRGKMSSSEGVTISMEDSR. Residues 212–216 carry the 'KMSKS' region motif; it reads KMSSS. Ser-215 serves as a coordination point for ATP.

It belongs to the class-I aminoacyl-tRNA synthetase family. TyrS type 3 subfamily. As to quaternary structure, homodimer.

The protein resides in the cytoplasm. The enzyme catalyses tRNA(Tyr) + L-tyrosine + ATP = L-tyrosyl-tRNA(Tyr) + AMP + diphosphate + H(+). Catalyzes the attachment of tyrosine to tRNA(Tyr) in a two-step reaction: tyrosine is first activated by ATP to form Tyr-AMP and then transferred to the acceptor end of tRNA(Tyr). In Halorubrum lacusprofundi (strain ATCC 49239 / DSM 5036 / JCM 8891 / ACAM 34), this protein is Tyrosine--tRNA ligase.